The chain runs to 763 residues: MSELLSFALFLASVLIYAWKAGRNTWWFAATLTVLGLFVVLNITLFASDYFTGDGINDAVLYTLTNSLTGAGVSKYILPGIGIVLGLTAVFGALGWILRRRRHHPHHFGYSLLALLLALGSVDASPAFRQITELVKSQSRDGDPDFAAYYKEPSKTIPDPKLNLVYIYGESLERTYFDNEAFPDLTPELGALKNEGLDFSHTQQLPGTDYTIAGMVASQCGIPLFAPFEGNASASVSSFFPQNICLGDILKNSGYQNYFVQGANLRFAGKDVFLKSHGFDHLYGSEELKSVVADPHYRNDWGFYDDTVLDEAWKKFEELSRSGQRFSLFTLTVDTHHPDGFISRTCNRKKYDFDGKPNQSFSAVSCSQENIATFINKIKASPWFKDTVIVVSSDHLAMNNTAWKYLNKQDRNNLFFVIRGDKPQQETLAVKRNTMDNGATVLDILGGDNYLGLGRSSLSGQSMSEIFLNIKEKTLAWKPDIIRLWKFPKEMKEFTIDQQKNMIAFSGSHFRLPLLLRVSDKRVEPLPESEYSAPLRFQLADFAPRDNFVWVDRCYKMAQLWAPELALSTDWCVSQGQLGGQQIVQHVDKTTWKGKTAFKDTVIDMARYKGNVDTLKIVDNDIRYKADSFIFNVAGAPEEVKQFSGISRPESWGRWSNAQLGDEVKIEYKHPLPKKFDLVITAKAYGNNASRPIPVRVGNEEQTLVLGNEVTTTTLHFDNPTDADTLVIVPPEPVSTNEGNILGHSPRKLGIGMVEIKVVEREG.

4 helical membrane-spanning segments follow: residues 1–21 (MSELLSFALFLASVLIYAWKA), 26–46 (WWFAATLTVLGLFVVLNITLF), 77–97 (ILPGIGIVLGLTAVFGALGWI), and 108–128 (FGYSLLALLLALGSVDASPAF).

It belongs to the OpgB family.

It localises to the cell inner membrane. It catalyses the reaction a phosphatidylglycerol + a membrane-derived-oligosaccharide D-glucose = a 1,2-diacyl-sn-glycerol + a membrane-derived-oligosaccharide 6-(glycerophospho)-D-glucose.. The protein operates within glycan metabolism; osmoregulated periplasmic glucan (OPG) biosynthesis. Transfers a phosphoglycerol residue from phosphatidylglycerol to the membrane-bound nascent glucan backbones. In Escherichia coli O17:K52:H18 (strain UMN026 / ExPEC), this protein is Phosphoglycerol transferase I.